Here is a 680-residue protein sequence, read N- to C-terminus: HEAT repeat-containing protein 3 (680 aa).

Residues 1 to 11 (MGKSRTKRFKR) are compositionally biased toward basic residues. The interval 1 to 39 (MGKSRTKRFKRPQFSPTGDCQAEAAAAANGTGGEEDDGP) is disordered. S15 is modified (phosphoserine). Low complexity predominate over residues 18–29 (GDCQAEAAAAAN). HEAT repeat units follow at residues 38–69 (GPAAELLEKLQHPSAEVRECACAGLARLVQQR) and 74–110 (GLARRDAVRRLGPLLLDPSLAVRETAAGALRNLSACG). At S144 the chain carries Phosphoserine. T340 is modified (phosphothreonine).

Belongs to the nuclear import and ribosome assembly adapter family. As to quaternary structure, component of a hexameric 5S RNP precursor complex, composed of 5S RNA, RRS1, RPF2/BXDC1, RPL5, RPL11 and HEATR3; this complex acts as a precursor for ribosome assembly.

In terms of biological role, plays a role in ribosome biogenesis and in nuclear import of the 60S ribosomal protein L5/large ribosomal subunit protein uL18 (RPL5). Required for proper erythrocyte maturation. The polypeptide is HEAT repeat-containing protein 3 (HEATR3) (Homo sapiens (Human)).